A 206-amino-acid chain; its full sequence is Large ribosomal subunit protein uL4 (206 aa).

A disordered region spans residues 48-75; it reads TQSAKTRAEVSGGGIKPWRQKGTGRARQ.

The protein belongs to the universal ribosomal protein uL4 family. In terms of assembly, part of the 50S ribosomal subunit.

One of the primary rRNA binding proteins, this protein initially binds near the 5'-end of the 23S rRNA. It is important during the early stages of 50S assembly. It makes multiple contacts with different domains of the 23S rRNA in the assembled 50S subunit and ribosome. Its function is as follows. Forms part of the polypeptide exit tunnel. In Clostridium botulinum (strain Loch Maree / Type A3), this protein is Large ribosomal subunit protein uL4.